The chain runs to 287 residues: ATP synthase gamma chain (287 aa).

It belongs to the ATPase gamma chain family. In terms of assembly, F-type ATPases have 2 components, CF(1) - the catalytic core - and CF(0) - the membrane proton channel. CF(1) has five subunits: alpha(3), beta(3), gamma(1), delta(1), epsilon(1). CF(0) has three main subunits: a, b and c.

It localises to the cell inner membrane. Functionally, produces ATP from ADP in the presence of a proton gradient across the membrane. The gamma chain is believed to be important in regulating ATPase activity and the flow of protons through the CF(0) complex. In Sodalis glossinidius (strain morsitans), this protein is ATP synthase gamma chain.